The following is a 152-amino-acid chain: ARL14 effector protein-like (152 aa).

The interval 1-21 is disordered; sequence MNEQSEKNNSIQERHTDHSFP.

The polypeptide is ARL14 effector protein-like (ARL14EPL) (Homo sapiens (Human)).